We begin with the raw amino-acid sequence, 593 residues long: Uroporphyrinogen-III C-methyltransferase (593 aa).

The disordered stretch occupies residues 278 to 303 (ETSSSPNKKTKQETVTEGVVPPTDEN).

This sequence belongs to the precorrin methyltransferase family.

It carries out the reaction uroporphyrinogen III + 2 S-adenosyl-L-methionine = precorrin-2 + 2 S-adenosyl-L-homocysteine + H(+). Its function is as follows. Siroheme synthase involved in methionine biosynthesis. The chain is Uroporphyrinogen-III C-methyltransferase from Saccharomyces cerevisiae (strain ATCC 204508 / S288c) (Baker's yeast).